The primary structure comprises 445 residues: Phosphoglucosamine mutase (445 aa).

Residue S101 is the Phosphoserine intermediate of the active site. The Mg(2+) site is built by S101, D240, D242, and D244. Position 101 is a phosphoserine (S101).

It belongs to the phosphohexose mutase family. It depends on Mg(2+) as a cofactor. In terms of processing, activated by phosphorylation.

It carries out the reaction alpha-D-glucosamine 1-phosphate = D-glucosamine 6-phosphate. Its function is as follows. Catalyzes the conversion of glucosamine-6-phosphate to glucosamine-1-phosphate. The polypeptide is Phosphoglucosamine mutase (Pseudomonas aeruginosa (strain LESB58)).